We begin with the raw amino-acid sequence, 880 residues long: Valine--tRNA ligase (880 aa).

The 'HIGH' region signature appears at 49–59 (PNVTGKLHLGH). Positions 525–529 (KMSKS) match the 'KMSKS' region motif. K528 lines the ATP pocket. A coiled-coil region spans residues 809–880 (LEGLINIEEE…VKARLAELKR (72 aa)).

Belongs to the class-I aminoacyl-tRNA synthetase family. ValS type 1 subfamily. As to quaternary structure, monomer.

The protein resides in the cytoplasm. The enzyme catalyses tRNA(Val) + L-valine + ATP = L-valyl-tRNA(Val) + AMP + diphosphate. Catalyzes the attachment of valine to tRNA(Val). As ValRS can inadvertently accommodate and process structurally similar amino acids such as threonine, to avoid such errors, it has a 'posttransfer' editing activity that hydrolyzes mischarged Thr-tRNA(Val) in a tRNA-dependent manner. The protein is Valine--tRNA ligase of Geobacillus kaustophilus (strain HTA426).